A 714-amino-acid polypeptide reads, in one-letter code: MYTKERERELIQRTKELLKIKKEHIKTKEDAEAIIEDLRDVIRYHDWRYYVLANPVISDYEYDQLFHLLKDIESRFPELITPDSPTQRVPSELTKEFPQVKHLAPMLSLDNSYNEEDLREFDRRVREAVGIDIIEYAVEPKFDGAGISLVYEKDMFVRGATRGDGVVGEDITPNIRVIKTVPLSAEFSVYGIDRIEIRGEVLINKEKFKEINHQRLEEGLPPLANPRNAAAGSLRLQDPKEVAKRGLEAFVYQITYAVDKDGNNLLGNKLRYHYDSIKILYELGFKSPYKEIKVCRGIDEVIDYCREWERKRDDYPYEIDGMVIKVNDISLYDRLGVTSHHPRWAIAFKFRARQATTKIIKVVFQVGRTGAVTPVAKLEPVEIGGVTVSSVSLINEDFIKEKDIRVGDLVLIERAGDVIPYVVKVVTEARTGKEKPIQFPKECPSCGSPLVKPAGEAVWRCININCPAQVVERIIYFASKDAMDIRGLGEANIRKFYQLGFLRSIPDIYRLPYDKIIQLEGFGQKSVENLKKAIEESKNRPINRLITGLGIRFVGKVTARTLAENINCVEDLKDWSVEDLERLPDVGYVVAHSIYDFFHNPDNIKMIQELKRLGVQTCKEKEEVVENIFEGKTFVFTGTLSCCSREIAQEIVERLGGHASSSVSRKTSYVVVGENPGSKYRKALSLGVQILDEKQFIEMIKDHIPDDLKDKVHL.

NAD(+) contacts are provided by residues aspartate 59–aspartate 63, serine 108–leucine 109, and glutamate 139. The N6-AMP-lysine intermediate role is filled by lysine 141. 4 residues coordinate NAD(+): arginine 162, glutamate 200, lysine 325, and lysine 349. Zn(2+) contacts are provided by cysteine 443, cysteine 446, cysteine 461, and cysteine 466. The BRCT domain maps to valine 624–histidine 713.

Belongs to the NAD-dependent DNA ligase family. LigA subfamily. Mg(2+) serves as cofactor. It depends on Mn(2+) as a cofactor.

The enzyme catalyses NAD(+) + (deoxyribonucleotide)n-3'-hydroxyl + 5'-phospho-(deoxyribonucleotide)m = (deoxyribonucleotide)n+m + AMP + beta-nicotinamide D-nucleotide.. DNA ligase that catalyzes the formation of phosphodiester linkages between 5'-phosphoryl and 3'-hydroxyl groups in double-stranded DNA using NAD as a coenzyme and as the energy source for the reaction. It is essential for DNA replication and repair of damaged DNA. This is DNA ligase from Persephonella marina (strain DSM 14350 / EX-H1).